The primary structure comprises 128 residues: MAKRSSLTRRGVSPRAAARARRHMRVRKKVRGTPERPRLVVTRSLKHIVAQIVDDTKGHTLVSASTLEASIRGEEGRKTEKSHLVGKVLAERAKAAGITAVVFDRAGYRYHGRVAALANGAREGGLEF.

A disordered region spans residues 1–36 (MAKRSSLTRRGVSPRAAARARRHMRVRKKVRGTPER). A compositionally biased stretch (basic residues) spans 18-31 (ARARRHMRVRKKVR).

It belongs to the universal ribosomal protein uL18 family. In terms of assembly, part of the 50S ribosomal subunit; part of the 5S rRNA/L5/L18/L25 subcomplex. Contacts the 5S and 23S rRNAs.

Functionally, this is one of the proteins that bind and probably mediate the attachment of the 5S RNA into the large ribosomal subunit, where it forms part of the central protuberance. The sequence is that of Large ribosomal subunit protein uL18 from Thermobifida fusca (strain YX).